Here is a 697-residue protein sequence, read N- to C-terminus: MTELSKYRNIGIFAHVDAGKTTTTERILKLTGKIHKIGEVHDGESTTDFMEQEAERGITIQSAAVSCFWKDHRFNVIDTPGHVDFTVEVYRSLKVLDGGIGVFCGSGGVEPQSETNWRYANDSEVARIIFVNKLDRMGADFLRVVKQTKDVLAANPLVMVLPIGIEDEFCGVVDLLTREAHIWDDSGLPENFEIKPVPADMVDIVEEYREMLIETALEQDDALLEAYMEGVQPSIEDVKRCIRAGTRTMAVFPTYCGSAFKNKGMQLLLDAVVDYLPDPVEVDPQPLTDEEGNENGEFAIVDVDAPFKALAFKIMDDRFGALTFVRIYSGRLKKGDTILNSFTGKTERIGRMVEMQANERNELESAQAGDIIAIVGMKNVQTGHTLCDPKHPCTLEAMVFPEPVISISVTPKDKGGSEKMGIAIGKMIAEDPSFRVETDIDSGETILKGMGELHLDIKVDILKRTYGVDLIVGEPQVAYRETITKEIEDSYTHKKQSGGSGQFGKIDYTIRPGEQNTGFTFTSKVVGGNVPKEFWPAVEKGFKSMMNTGTIAGFPVLDVELVLQDGAFHAVDSSAIAFEIAAKGAFRQSMPKAGAQLLEPIMNVDVFSPDDNVGDVIGDLNRRRGMIKDQNAGVTGVRIKADVPLSEMFGYIGSLRTMTSGRGQFSMEFAHYSPCPNSVSEKVVAQVKERKAAEAKK.

The tr-type G domain occupies 5 to 280 (SKYRNIGIFA…AVVDYLPDPV (276 aa)). GTP contacts are provided by residues 14 to 21 (AHVDAGKT), 78 to 82 (DTPGH), and 132 to 135 (NKLD).

Belongs to the TRAFAC class translation factor GTPase superfamily. Classic translation factor GTPase family. EF-G/EF-2 subfamily.

The protein resides in the cytoplasm. Functionally, catalyzes the GTP-dependent ribosomal translocation step during translation elongation. During this step, the ribosome changes from the pre-translocational (PRE) to the post-translocational (POST) state as the newly formed A-site-bound peptidyl-tRNA and P-site-bound deacylated tRNA move to the P and E sites, respectively. Catalyzes the coordinated movement of the two tRNA molecules, the mRNA and conformational changes in the ribosome. This chain is Elongation factor G 2, found in Shewanella frigidimarina (strain NCIMB 400).